The primary structure comprises 368 residues: Phospho-N-acetylmuramoyl-pentapeptide-transferase (368 aa).

Helical transmembrane passes span 50 to 70, 95 to 115, 117 to 137, 156 to 176, 183 to 203, 218 to 238, 242 to 262, 284 to 304, and 347 to 367; these read LLAL…VVPL, PTMG…ILAG, SPLV…GWLD, LCLQ…QQGW, ITLP…LAVF, LDGL…LWLA, PAIA…LLHN, AIAI…LFVL, and TQVV…CWLL.

This sequence belongs to the glycosyltransferase 4 family. MraY subfamily. The cofactor is Mg(2+).

It is found in the cell inner membrane. The catalysed reaction is UDP-N-acetyl-alpha-D-muramoyl-L-alanyl-gamma-D-glutamyl-meso-2,6-diaminopimeloyl-D-alanyl-D-alanine + di-trans,octa-cis-undecaprenyl phosphate = di-trans,octa-cis-undecaprenyl diphospho-N-acetyl-alpha-D-muramoyl-L-alanyl-D-glutamyl-meso-2,6-diaminopimeloyl-D-alanyl-D-alanine + UMP. It participates in cell wall biogenesis; peptidoglycan biosynthesis. Its function is as follows. Catalyzes the initial step of the lipid cycle reactions in the biosynthesis of the cell wall peptidoglycan: transfers peptidoglycan precursor phospho-MurNAc-pentapeptide from UDP-MurNAc-pentapeptide onto the lipid carrier undecaprenyl phosphate, yielding undecaprenyl-pyrophosphoryl-MurNAc-pentapeptide, known as lipid I. This is Phospho-N-acetylmuramoyl-pentapeptide-transferase from Synechococcus sp. (strain ATCC 27144 / PCC 6301 / SAUG 1402/1) (Anacystis nidulans).